Here is a 471-residue protein sequence, read N- to C-terminus: Cleavage and polyadenylation specificity factor subunit 7 (471 aa).

The segment at 34–68 (VLTAASQPSDDRSSSTEPPPPVRQEPAPKPNNKTP) is disordered. The span at 50–62 (EPPPPVRQEPAPK) shows a compositional bias: pro residues. Residues 82–162 (AAVYVGSFSW…EKVDVRPATR (81 aa)) form the RRM domain. Residues 176-220 (ECVRVPRGGIPPRAHSRDSSDSADGRATPSENLVPSSARVDKPPS) are disordered. Residues 190–199 (HSRDSSDSAD) show a composition bias toward basic and acidic residues. Thr-203 bears the Phosphothreonine mark. Position 205 is a phosphoserine (Ser-205). Lys-354 participates in a covalent cross-link: Glycyl lysine isopeptide (Lys-Gly) (interchain with G-Cter in SUMO2). The segment at 409 to 471 (SVGASGSSSR…HRDRERDRHH (63 aa)) is disordered. A phosphoserine mark is found at Ser-413 and Ser-423. Residues 418-469 (RKRHRSRERSPSRSRESSRRHRDLLHNEDRHDDYFQERNREHERHRDRERDR) are arg/Ser-rich domain. Composition is skewed to basic and acidic residues over residues 425 to 434 (ERSPSRSRES) and 441 to 471 (LLHN…DRHH).

It belongs to the RRM CPSF6/7 family. As to quaternary structure, component of the cleavage factor Im (CFIm) complex which is a heterotetramer composed of two subunits of NUDT21/CPSF5 and two subunits of CPSF6 or CPSF7 or a heterodimer of CPSF6 and CPSF7. The cleavage factor Im (CFIm) complex associates with the CPSF and CSTF complexes to promote the assembly of the core mRNA 3'-processing machinery. Interacts with NUDT21/CPSF5. Interacts (via Arg/Ser-rich domain) with FIP1L1 (preferentially via unphosphorylated form and Arg/Glu/Asp-rich region); this interaction mediates, at least in part, the interaction between the CFIm and CPSF complexes and may be inhibited by CPSF7 hyper-phosphorylation. Phosphorylated. In terms of processing, asymmetrically dimethylated on arginine residues by PRMT1.

The protein localises to the nucleus. It is found in the cytoplasm. In terms of biological role, component of the cleavage factor Im (CFIm) complex that functions as an activator of the pre-mRNA 3'-end cleavage and polyadenylation processing required for the maturation of pre-mRNA into functional mRNAs. CFIm contributes to the recruitment of multiprotein complexes on specific sequences on the pre-mRNA 3'-end, so called cleavage and polyadenylation signals (pA signals). Most pre-mRNAs contain multiple pA signals, resulting in alternative cleavage and polyadenylation (APA) producing mRNAs with variable 3'-end formation. The CFIm complex acts as a key regulator of cleavage and polyadenylation site choice during APA through its binding to 5'-UGUA-3' elements localized in the 3'-untranslated region (UTR) for a huge number of pre-mRNAs. CPSF7 activates directly the mRNA 3'-processing machinery. Binds to pA signals in RNA substrates. In Mus musculus (Mouse), this protein is Cleavage and polyadenylation specificity factor subunit 7.